Consider the following 46-residue polypeptide: Transcriptional regulator SEHBP (46 aa).

In terms of assembly, interacts with histone H2B. Also interacts with chromatin-binding proteins HMGN1 and HMGN3.

The protein resides in the nucleus. Its subcellular location is the cytoplasm. In terms of biological role, plays a role in transcription regulation. This chain is Transcriptional regulator SEHBP, found in Homo sapiens (Human).